The sequence spans 57 residues: Small ribosomal subunit protein bS21 (57 aa).

This sequence belongs to the bacterial ribosomal protein bS21 family.

This is Small ribosomal subunit protein bS21 from Phytoplasma australiense.